Reading from the N-terminus, the 414-residue chain is Tryptophan synthase beta chain (414 aa).

K108 bears the N6-(pyridoxal phosphate)lysine mark.

It belongs to the TrpB family. In terms of assembly, tetramer of two alpha and two beta chains. It depends on pyridoxal 5'-phosphate as a cofactor.

It carries out the reaction (1S,2R)-1-C-(indol-3-yl)glycerol 3-phosphate + L-serine = D-glyceraldehyde 3-phosphate + L-tryptophan + H2O. The protein operates within amino-acid biosynthesis; L-tryptophan biosynthesis; L-tryptophan from chorismate: step 5/5. In terms of biological role, the beta subunit is responsible for the synthesis of L-tryptophan from indole and L-serine. The protein is Tryptophan synthase beta chain of Beijerinckia indica subsp. indica (strain ATCC 9039 / DSM 1715 / NCIMB 8712).